A 31-amino-acid polypeptide reads, in one-letter code: MPTITSYFGFLLAASTITPALLIGLSKIRLI.

A helical transmembrane segment spans residues 4–26 (ITSYFGFLLAASTITPALLIGLS).

It belongs to the PetL family. As to quaternary structure, the 4 large subunits of the cytochrome b6-f complex are cytochrome b6, subunit IV (17 kDa polypeptide, PetD), cytochrome f and the Rieske protein, while the 4 small subunits are PetG, PetL, PetM and PetN. The complex functions as a dimer.

The protein resides in the plastid. It is found in the chloroplast thylakoid membrane. Its function is as follows. Component of the cytochrome b6-f complex, which mediates electron transfer between photosystem II (PSII) and photosystem I (PSI), cyclic electron flow around PSI, and state transitions. PetL is important for photoautotrophic growth as well as for electron transfer efficiency and stability of the cytochrome b6-f complex. The chain is Cytochrome b6-f complex subunit 6 from Illicium oligandrum (Star anise).